The sequence spans 215 residues: Peroxiredoxin (215 aa).

The Thioredoxin domain maps to 6–161; the sequence is PLIGEEFPRV…ILRAVKALQT (156 aa). Catalysis depends on C48, which acts as the Cysteine sulfenic acid (-SOH) intermediate. R124 provides a ligand contact to substrate. Cysteines 205 and 211 form a disulfide.

The protein belongs to the peroxiredoxin family. Prx6 subfamily. As to quaternary structure, homodecamer. Pentamer of dimers that assemble into a ring structure.

Its subcellular location is the cytoplasm. It carries out the reaction a hydroperoxide + [thioredoxin]-dithiol = an alcohol + [thioredoxin]-disulfide + H2O. Functionally, thiol-specific peroxidase that catalyzes the reduction of hydrogen peroxide and organic hydroperoxides to water and alcohols, respectively. Plays a role in cell protection against oxidative stress by detoxifying peroxides. The sequence is that of Peroxiredoxin from Thermotoga maritima (strain ATCC 43589 / DSM 3109 / JCM 10099 / NBRC 100826 / MSB8).